Reading from the N-terminus, the 370-residue chain is Actin-related protein 2/3 complex subunit 1A-A (370 aa).

6 WD repeats span residues 6–45, 50–89, 140–179, 202–241, 244–284, and 322–365; these read FLLEPISCHAWNKDLTQIAISPNNHEVHIYKKSGDQWVKG, EHNGHITGIDWAPKSDRIVTCGADRNAYVWSQKDGVWKPT, PIRSTVLSLDWHPNNVLLAAGSCDFKTRVFSAYIKEVDEK, SSGGWVHSVSFSASGNKLAWVSHDSTVSVADASKNMSVSQ, TEFL…TFVS, and LHQN…SYIQ.

Belongs to the WD repeat ARPC1 family. In terms of assembly, component of the Arp2/3 complex.

It localises to the cytoplasm. The protein resides in the cytoskeleton. The protein localises to the nucleus. Functionally, probably functions as a component of the Arp2/3 complex which is involved in regulation of actin polymerization and together with an activating nucleation-promoting factor (NPF) mediates the formation of branched actin networks. In addition to its role in the cytoplasmic cytoskeleton, the Arp2/3 complex also promotes actin polymerization in the nucleus, thereby regulating gene transcription and repair of damaged DNA. This chain is Actin-related protein 2/3 complex subunit 1A-A (arpc1a-a), found in Xenopus laevis (African clawed frog).